Here is a 213-residue protein sequence, read N- to C-terminus: CDP-diacylglycerol--inositol 3-phosphatidyltransferase (213 aa).

At 1 to 5 (MPEEN) the chain is on the cytoplasmic side. A helical membrane pass occupies residues 6 to 26 (IFLFVPNLIGYARIVFAIISF). Position 27 (Y27) is a topological domain, lumenal. The helical transmembrane segment at 28-48 (FMPCCPFTASSFYLLSGLLDA) threads the bilayer. Mg(2+)-binding residues include D47 and D50. The Cytoplasmic portion of the chain corresponds to 49-73 (FDGHAARALNQGTRFGAMLDMLTDR). Residues G51, R55, and T61 each contribute to the a CDP-1,2-diacyl-sn-glycerol site. Positions 68 and 72 each coordinate Mg(2+). D72 serves as the catalytic Proton acceptor. The helical transmembrane segment at 74–94 (CATMCLLVNLALLYPRATLLF) threads the bilayer. Q95 is a topological domain (lumenal). A helical membrane pass occupies residues 96-116 (LSMSLDVASHWLHLHSSVVRG). Residues 117–139 (SESHKMIDLSGNPVLRIYYTSRP) are Cytoplasmic-facing. Residues 140–160 (ALFTLCAGNELFYCLLYLFNF) form a helical membrane-spanning segment. Topologically, residues 161–174 (SEGPLVGSVGLFRM) are lumenal. The chain crosses the membrane as a helical span at residues 175–195 (GLWVTAPIALLKSVISVIHLI). The Cytoplasmic segment spans residues 196 to 213 (TAARNMAALDAADRAKKK).

This sequence belongs to the CDP-alcohol phosphatidyltransferase class-I family. It depends on Mn(2+) as a cofactor. Mg(2+) serves as cofactor.

It is found in the endoplasmic reticulum membrane. Its subcellular location is the cell membrane. The enzyme catalyses a CDP-1,2-diacyl-sn-glycerol + myo-inositol = a 1,2-diacyl-sn-glycero-3-phospho-(1D-myo-inositol) + CMP + H(+). Catalyzes the biosynthesis of phosphatidylinositol (PtdIns) as well as PtdIns:inositol exchange reaction. May thus act to reduce an excessive cellular PtdIns content. The exchange activity is due to the reverse reaction of PtdIns synthase and is dependent on CMP, which is tightly bound to the enzyme. The protein is CDP-diacylglycerol--inositol 3-phosphatidyltransferase of Mus musculus (Mouse).